The chain runs to 439 residues: tRNA modification GTPase MnmE (439 aa).

(6S)-5-formyl-5,6,7,8-tetrahydrofolate-binding residues include Arg-24, Glu-81, and Lys-121. A TrmE-type G domain is found at 218 to 363 (GFKVVIAGAP…LRRLIGDIVE (146 aa)). Asn-228 contacts K(+). Residues 228-233 (NAGKSS), 247-253 (TEIAGTT), and 272-275 (DTAG) contribute to the GTP site. Ser-232 is a binding site for Mg(2+). K(+) contacts are provided by Thr-247, Ile-249, and Thr-252. Thr-253 serves as a coordination point for Mg(2+). Position 439 (Lys-439) interacts with (6S)-5-formyl-5,6,7,8-tetrahydrofolate.

The protein belongs to the TRAFAC class TrmE-Era-EngA-EngB-Septin-like GTPase superfamily. TrmE GTPase family. In terms of assembly, homodimer. Heterotetramer of two MnmE and two MnmG subunits. K(+) serves as cofactor.

It localises to the cytoplasm. Its function is as follows. Exhibits a very high intrinsic GTPase hydrolysis rate. Involved in the addition of a carboxymethylaminomethyl (cmnm) group at the wobble position (U34) of certain tRNAs, forming tRNA-cmnm(5)s(2)U34. The protein is tRNA modification GTPase MnmE of Rhizobium johnstonii (strain DSM 114642 / LMG 32736 / 3841) (Rhizobium leguminosarum bv. viciae).